The sequence spans 437 residues: tRNA-2-methylthio-N(6)-dimethylallyladenosine synthase (437 aa).

One can recognise an MTTase N-terminal domain in the interval 1-115 (MKVYIETMGC…ISQVIHKEKA (115 aa)). The [4Fe-4S] cluster site is built by Cys10, Cys46, Cys78, Cys148, Cys152, and Cys155. Residues 134–367 (KKAQIRSLLN…QNRHKEILEE (234 aa)) enclose the Radical SAM core domain. Positions 370 to 436 (KLEVGKTHVV…KGRLMATTKG (67 aa)) constitute a TRAM domain.

This sequence belongs to the methylthiotransferase family. MiaB subfamily. Monomer. It depends on [4Fe-4S] cluster as a cofactor.

The protein localises to the cytoplasm. It catalyses the reaction N(6)-dimethylallyladenosine(37) in tRNA + (sulfur carrier)-SH + AH2 + 2 S-adenosyl-L-methionine = 2-methylsulfanyl-N(6)-dimethylallyladenosine(37) in tRNA + (sulfur carrier)-H + 5'-deoxyadenosine + L-methionine + A + S-adenosyl-L-homocysteine + 2 H(+). Functionally, catalyzes the methylthiolation of N6-(dimethylallyl)adenosine (i(6)A), leading to the formation of 2-methylthio-N6-(dimethylallyl)adenosine (ms(2)i(6)A) at position 37 in tRNAs that read codons beginning with uridine. In Helicobacter pylori (strain J99 / ATCC 700824) (Campylobacter pylori J99), this protein is tRNA-2-methylthio-N(6)-dimethylallyladenosine synthase.